The following is a 381-amino-acid chain: Phthiodiolone/phenolphthiodiolone dimycocerosates ketoreductase (381 aa).

Belongs to the mer family. Phthiodiolone/phenolphthiodiolone dimycocerosates ketoreductase subfamily.

Functionally, catalyzes the reduction of the keto moiety of phthiodiolone dimycocerosates (DIM B) and glycosylated phenolphthiodiolone dimycocerosates to form the intermediate compounds phthiotriol and glycosylated phenolphthiotriol dimycocerosates during phthiocerol dimycocerosates (DIM A) and glycosylated phenolphthiocerol dimycocerosates (PGL) biosynthesis. The chain is Phthiodiolone/phenolphthiodiolone dimycocerosates ketoreductase from Mycobacterium bovis (strain ATCC BAA-935 / AF2122/97).